We begin with the raw amino-acid sequence, 114 residues long: Iron-sulfur cluster insertion protein ErpA (114 aa).

The iron-sulfur cluster site is built by Cys-42, Cys-106, and Cys-108.

It belongs to the HesB/IscA family. Homodimer. Requires iron-sulfur cluster as cofactor.

Functionally, required for insertion of 4Fe-4S clusters for at least IspG. In Yersinia enterocolitica serotype O:8 / biotype 1B (strain NCTC 13174 / 8081), this protein is Iron-sulfur cluster insertion protein ErpA.